Reading from the N-terminus, the 249-residue chain is MTRKLVLLRHGQSQWNLDNRFTGWVDVELTDQGRQEAVAAGRLMKDEGLQFDVAHTSVLKRAIHTLQGALKELDQDWLPVSKSWRLNERHYGGLQGLDKAETAAKHGEEQVKIWRRSYDIPPPAMDVNDPGHPCHDRRYATLDRNALPGTESLATTLVRVLPYWHDAIAPQLKAGQTVLVTAHGNSLRALYKYLNDVSNEQILELNIPTGIPLLFELDDSLQVRSFRYLGDPEAAKRAAEAVANQGKAK.

Substrate contacts are provided by residues 9–16, 22–23, arginine 61, 88–91, lysine 99, 115–116, and 184–185; these read RHGQSQWN, TG, ERHY, RR, and GN. Histidine 10 acts as the Tele-phosphohistidine intermediate in catalysis. Catalysis depends on glutamate 88, which acts as the Proton donor/acceptor.

This sequence belongs to the phosphoglycerate mutase family. BPG-dependent PGAM subfamily. As to quaternary structure, homodimer.

The enzyme catalyses (2R)-2-phosphoglycerate = (2R)-3-phosphoglycerate. It functions in the pathway carbohydrate degradation; glycolysis; pyruvate from D-glyceraldehyde 3-phosphate: step 3/5. Catalyzes the interconversion of 2-phosphoglycerate and 3-phosphoglycerate. This Xanthomonas axonopodis pv. citri (strain 306) protein is 2,3-bisphosphoglycerate-dependent phosphoglycerate mutase.